The primary structure comprises 361 residues: Cytochrome c peroxidase, mitochondrial (361 aa).

A mitochondrion-targeting transit peptide spans 1–67; it reads MTTAVRLLPS…NWGKAAALAS (67 aa). H119 acts as the Proton acceptor in catalysis. Position 220 is a phosphotyrosine (Y220). H242 contacts heme b. Catalysis depends on W258, which acts as the Tryptophan radical intermediate.

This sequence belongs to the peroxidase family. Cytochrome c peroxidase subfamily. Forms a one-to-one complex with cytochrome c. Heme b is required as a cofactor. In terms of processing, CCP1 precursor is processed by the rhomboid protease PCP1, which cleaves the N-terminal hydrophobic transit peptide. The m-AAA protease (composed of YTA12/RCA1 and YTA10/AFG3) is required for CCP1 maturation: m-AAA protease promotes membrane dislocation of the CCP1 transmembrane segment within the transit peptide to ensure the correct positioning of CCP1 within the membrane bilayer, allowing intramembrane cleavage by PCP1.

It is found in the mitochondrion matrix. The protein resides in the mitochondrion intermembrane space. It carries out the reaction 2 Fe(II)-[cytochrome c] + H2O2 + 2 H(+) = 2 Fe(III)-[cytochrome c] + 2 H2O. Functionally, destroys radicals which are normally produced within the cells and which are toxic to biological systems. This Saccharomyces cerevisiae (strain ATCC 204508 / S288c) (Baker's yeast) protein is Cytochrome c peroxidase, mitochondrial (CCP1).